Consider the following 928-residue polypeptide: Diacylglycerol kinase zeta (928 aa).

Positions 1 to 14 (MEPRDGSPEARSSD) are enriched in basic and acidic residues. Disordered stretches follow at residues 1 to 46 (MEPR…RRFP) and 59 to 82 (KSGL…SERQ). Over residues 15-24 (SESASASSSG) the composition is skewed to low complexity. Residues 25–37 (SERDAGPEPDKAP) are compositionally biased toward basic and acidic residues. Phorbol-ester/DAG-type zinc fingers lie at residues 98–152 (HIWF…NFRC) and 172–230 (HHWV…EEPC). The disordered stretch occupies residues 251–280 (PQNTLKASKKKKRASFKRKSSKKGPEEGRW). Basic residues predominate over residues 257-272 (ASKKKKRASFKRKSSK). The segment at 259 to 273 (KKKKRASFKRKSSKK) is MARCKS homology. The segment at 278-416 (GRWRPFIIRP…HVEEGNVVQL (139 aa)) is mediates interaction with RASGRP1. One can recognise a DAGKc domain in the interval 291–425 (PLMKPLLVFV…LDRWDLHAEP (135 aa)). The short motif at 361–369 (LSTLDQLRL) is the Nuclear export signal element. Position 705 is a phosphoserine (Ser-705). Residues 759-788 (ARPDLPTPTSPLPTSPCSPTPRSLQGDAAP) are disordered. Residues 763-777 (LPTPTSPLPTSPCSP) show a composition bias toward pro residues. At Ser-781 the chain carries Phosphoserine. 2 ANK repeats span residues 822-852 (QSRT…EILD) and 857-886 (NGET…SLMK). The PDZ-binding motif lies at 924–928 (QETAV).

Belongs to the eukaryotic diacylglycerol kinase family. As to quaternary structure, interacts (via PDZ-binding motif) with the PDZ domain of the syntrophin SNTG1 and that of SNX27. Interacts with IRS1 in the absence of insulin; insulin stimulation decreases this interaction. Found in a ternary complex with IRS1 and PIP5K1A in the absence of insulin. Interacts with PIP5K1A. In terms of assembly, forms a signaling complex with RASGRP1 and HRAS. Post-translationally, phosphorylation of the MARCKS homology domain by PKC reduces nuclear accumulation of DGK-zeta. As to expression, highest levels in brain, and substantial levels in skeletal muscle, heart, and pancreas. In terms of tissue distribution, predominantly expressed in muscle.

Its subcellular location is the nucleus. The protein resides in the cytoplasm. The protein localises to the cytosol. It localises to the cell membrane. It is found in the cell projection. Its subcellular location is the lamellipodium. The catalysed reaction is a 1,2-diacyl-sn-glycerol + ATP = a 1,2-diacyl-sn-glycero-3-phosphate + ADP + H(+). The enzyme catalyses a 1-O-alkyl-sn-glycerol + ATP = a 1-O-alkyl-sn-glycero-3-phosphate + ADP + H(+). It carries out the reaction 1-O-alkyl-2-acyl-sn-glycerol + ATP = 1-O-alkyl-2-acyl-sn-glycero-3-phosphate + ADP + H(+). It catalyses the reaction 1,2-didecanoyl-sn-glycerol + ATP = 1,2-didecanoyl-sn-glycero-3-phosphate + ADP + H(+). The catalysed reaction is 1,2-ditetradecanoyl-sn-glycerol + ATP = 1,2-ditetradecanoyl-sn-glycero-3-phosphate + ADP + H(+). The enzyme catalyses 1-hexadecanoyl-2-(9Z-octadecenoyl)-sn-glycerol + ATP = 1-hexadecanoyl-2-(9Z-octadecenoyl)-sn-glycero-3-phosphate + ADP + H(+). It carries out the reaction 1-hexadecanoyl-2-(5Z,8Z,11Z,14Z-eicosatetraenoyl)-sn-glycerol + ATP = 1-hexadecanoyl-2-(5Z,8Z,11Z,14Z-eicosatetraenoyl)-sn-glycero-3-phosphate + ADP + H(+). It catalyses the reaction 1-octadecanoyl-2-(9Z-octadecenoyl)-sn-glycerol + ATP = 1-octadecanoyl-2-(9Z-octadecenoyl)-sn-glycero-3-phosphate + ADP + H(+). The catalysed reaction is 1-octadecanoyl-2-(5Z,8Z,11Z,14Z-eicosatetraenoyl)-sn-glycerol + ATP = 1-octadecanoyl-2-(5Z,8Z,11Z,14Z-eicosatetraenoyl)-sn-glycero-3-phosphate + ADP + H(+). The enzyme catalyses 1-octadecanoyl-2-(4Z,7Z,10Z,13Z,16Z,19Z-docosahexaenoyl)-sn-glycerol + ATP = 1-octadecanoyl-2-(4Z,7Z,10Z,13Z,16Z,19Z-docosahexaenoyl)-sn-glycero-3-phosphate + ADP + H(+). It carries out the reaction 1,2-di-(9Z-octadecenoyl)-sn-glycerol + ATP = 1,2-di-(9Z-octadecenoyl)-sn-glycero-3-phosphate + ADP + H(+). It catalyses the reaction 1-(9Z-octadecenoyl)-2-hexadecanoyl-sn-glycerol + ATP = 1-(9Z)-octadecenoyl-2-hexadecanoyl-sn-glycero-3-phosphate + ADP + H(+). The catalysed reaction is 1-eicosanoyl-2-(5Z,8Z,11Z,14Z)-eicosatetraenoyl-sn-glycerol + ATP = 1-eicosanoyl-2-(5Z,8Z,11Z,14Z)-eicosatetraenoyl-sn-glycero-3-phosphate + ADP + H(+). The enzyme catalyses 1,2-di-(5Z,8Z,11Z,14Z)-eicosatetraenoyl-sn-glycerol + ATP = 1,2-di-(5Z,8Z,11Z,14Z)-eicosatetraenoyl-sn-glycero-3-phosphate + ADP + H(+). It carries out the reaction 1-O-hexadecyl-2-acetyl-sn-glycerol + ATP = 1-O-hexadecyl-2-acetyl-sn-glycero-3-phosphate + ADP + H(+). It catalyses the reaction 1-O-hexadecyl-2-(5Z,8Z,11Z,14Z-eicosatetraenoyl)-sn-glycerol + ATP = 1-O-hexadecyl-2-(5Z,8Z,11Z,14Z-eicosatetraenoyl)-sn-glycero-3-phosphate + ADP + H(+). The catalysed reaction is 1-O-hexadecyl-2-(9Z-octadecenoyl)-sn-glycerol + ATP = 1-O-hexadecyl-2-(9Z-octadecenoyl)-sn-glycero-3-phosphate + ADP + H(+). The enzyme catalyses 1-O-hexadecyl-sn-glycerol + ATP = 1-O-hexadecyl-sn-glycero-3-phosphate + ADP + H(+). Its pathway is lipid metabolism; glycerolipid metabolism. With respect to regulation, activated by 1,2-diacyl-sn-glycero-3-phosphate/phosphatidic acid irrespective of its acyl chain composition. Diacylglycerol kinase that converts diacylglycerol/DAG into phosphatidic acid/phosphatidate/PA and regulates the respective levels of these two bioactive lipids. Thereby, acts as a central switch between the signaling pathways activated by these second messengers with different cellular targets and opposite effects in numerous biological processes. Also plays an important role in the biosynthesis of complex lipids. Does not exhibit an acyl chain-dependent substrate specificity among diacylglycerol species. Can also phosphorylate 1-alkyl-2-acylglycerol in vitro but less efficiently and with a preference for alkylacylglycerols containing an arachidonoyl group. The biological processes it is involved in include T cell activation since it negatively regulates T-cell receptor signaling which is in part mediated by diacylglycerol. By generating phosphatidic acid, stimulates PIP5KIA activity which regulates actin polymerization. Through the same mechanism could also positively regulate insulin-induced translocation of SLC2A4 to the cell membrane. Its function is as follows. Regulates RASGRP1 activity. In terms of biological role, does not regulate RASGRP1 activity. The sequence is that of Diacylglycerol kinase zeta from Homo sapiens (Human).